The chain runs to 440 residues: Actin-like protein 7A (440 aa).

The interval 1 to 29 (MSLDGVWAPQTANIGDGPAKKASDQASMQ) is disordered. Positions 36-56 (ASLKDGPAKRAVWVRRDNAET) are required for interaction with TES.

The protein belongs to the actin family. In terms of assembly, interacts (via N-terminus) with TES (via LIM domain 2). Heterodimer with TES; the heterodimer interacts with ENAH to form a heterotrimer. Interacts with ACTL9. Interacts with CYLC1; the interaction may be relevant for proper acrosome attachment to the nuclear envelope. Detected in testis. Detected at the acrosome of round spermatids (at protein level). Detected in adult and embryonic testis. Detected in developing male germ cells.

Its subcellular location is the cytoplasm. The protein localises to the cytoskeleton. It is found in the golgi apparatus. It localises to the nucleus. The protein resides in the cytoplasmic vesicle. Its subcellular location is the secretory vesicle. The protein localises to the acrosome. In terms of biological role, essential for normal spermatogenesis and male fertility. Required for normal sperm head morphology, acroplaxome formation, acrosome attachment, and acrosome granule stability. May anchor and stabilize acrosomal adherence to the acroplaxome at least in part by facilitating the presence of F-actin in the subacrosomal space. May play an important role in formation and fusion of Golgi-derived vesicles during acrosome biogenesis. The chain is Actin-like protein 7A (Actl7a) from Mus musculus (Mouse).